The chain runs to 404 residues: tRNA-specific 2-thiouridylase MnmA (404 aa).

ATP-binding positions include 42–49 (GLSGGVDS) and L68. Residue C129 is the Nucleophile of the active site. The cysteines at positions 129 and 239 are disulfide-linked. G154 contacts ATP. Residues 189 to 191 (KDQ) form an interaction with tRNA region. Catalysis depends on C239, which acts as the Cysteine persulfide intermediate. An interaction with tRNA region spans residues 344-345 (RY).

It belongs to the MnmA/TRMU family.

It localises to the cytoplasm. The catalysed reaction is S-sulfanyl-L-cysteinyl-[protein] + uridine(34) in tRNA + AH2 + ATP = 2-thiouridine(34) in tRNA + L-cysteinyl-[protein] + A + AMP + diphosphate + H(+). Catalyzes the 2-thiolation of uridine at the wobble position (U34) of tRNA, leading to the formation of s(2)U34. The sequence is that of tRNA-specific 2-thiouridylase MnmA from Prochlorococcus marinus (strain NATL1A).